The following is a 407-amino-acid chain: Nicotinate phosphoribosyltransferase (407 aa).

His-224 bears the Phosphohistidine; by autocatalysis mark.

It belongs to the NAPRTase family. Transiently phosphorylated on a His residue during the reaction cycle. Phosphorylation strongly increases the affinity for substrates and increases the rate of nicotinate D-ribonucleotide production. Dephosphorylation regenerates the low-affinity form of the enzyme, leading to product release.

The catalysed reaction is nicotinate + 5-phospho-alpha-D-ribose 1-diphosphate + ATP + H2O = nicotinate beta-D-ribonucleotide + ADP + phosphate + diphosphate. The protein operates within cofactor biosynthesis; NAD(+) biosynthesis; nicotinate D-ribonucleotide from nicotinate: step 1/1. Catalyzes the synthesis of beta-nicotinate D-ribonucleotide from nicotinate and 5-phospho-D-ribose 1-phosphate at the expense of ATP. The sequence is that of Nicotinate phosphoribosyltransferase from Pseudomonas savastanoi pv. phaseolicola (strain 1448A / Race 6) (Pseudomonas syringae pv. phaseolicola (strain 1448A / Race 6)).